The chain runs to 321 residues: Ribose-phosphate pyrophosphokinase (321 aa).

Residues 44–46 (DGE) and 103–104 (RQ) each bind ATP. Residues His-137 and Asp-179 each coordinate Mg(2+). Lys-202 is a catalytic residue. D-ribose 5-phosphate is bound by residues Arg-204, Asp-228, and 232 to 236 (DTAGT).

It belongs to the ribose-phosphate pyrophosphokinase family. Class I subfamily. As to quaternary structure, homohexamer. The cofactor is Mg(2+).

It is found in the cytoplasm. The enzyme catalyses D-ribose 5-phosphate + ATP = 5-phospho-alpha-D-ribose 1-diphosphate + AMP + H(+). It participates in metabolic intermediate biosynthesis; 5-phospho-alpha-D-ribose 1-diphosphate biosynthesis; 5-phospho-alpha-D-ribose 1-diphosphate from D-ribose 5-phosphate (route I): step 1/1. Involved in the biosynthesis of the central metabolite phospho-alpha-D-ribosyl-1-pyrophosphate (PRPP) via the transfer of pyrophosphoryl group from ATP to 1-hydroxyl of ribose-5-phosphate (Rib-5-P). In Staphylococcus haemolyticus (strain JCSC1435), this protein is Ribose-phosphate pyrophosphokinase.